A 199-amino-acid chain; its full sequence is 7-methyl-GTP pyrophosphatase (199 aa).

Asp76 (proton acceptor) is an active-site residue.

This sequence belongs to the Maf family. YceF subfamily. The cofactor is a divalent metal cation.

Its subcellular location is the cytoplasm. It carries out the reaction N(7)-methyl-GTP + H2O = N(7)-methyl-GMP + diphosphate + H(+). Functionally, nucleoside triphosphate pyrophosphatase that hydrolyzes 7-methyl-GTP (m(7)GTP). May have a dual role in cell division arrest and in preventing the incorporation of modified nucleotides into cellular nucleic acids. The protein is 7-methyl-GTP pyrophosphatase of Nitrosococcus oceani (strain ATCC 19707 / BCRC 17464 / JCM 30415 / NCIMB 11848 / C-107).